Consider the following 493-residue polypeptide: UDP-glucose 6-dehydrogenase (493 aa).

NAD(+)-binding positions include Gly11 to Gly16, Asp36, Arg41, and Val89 to Thr93. Positions Ser88–Glu110 are disordered. An N6-acetyllysine modification is found at Lys107. The tract at residues Lys129–Arg135 is allosteric switch region. Ser130–Val132 is a binding site for NAD(+). The active-site Proton donor/acceptor is Glu161. Residues Glu161 to Glu165, Lys220 to Asn224, Arg260, and Lys267 to Gly273 contribute to the substrate site. Glu165 is a binding site for NAD(+). Lys220 acts as the Proton donor/acceptor in catalysis. Cys276 serves as the catalytic Nucleophile. Residue Cys276–Lys279 coordinates NAD(+). Positions Ser321–Thr325 are important for formation of active hexamer structure. Phe338–Lys339 is a binding site for substrate. Arg346 provides a ligand contact to NAD(+). Arg442 is a substrate binding site. The interval Val466–Val493 is disordered. Thr474 carries the post-translational modification Phosphothreonine.

Belongs to the UDP-glucose/GDP-mannose dehydrogenase family. In terms of assembly, homohexamer.

The catalysed reaction is UDP-alpha-D-glucose + 2 NAD(+) + H2O = UDP-alpha-D-glucuronate + 2 NADH + 3 H(+). It participates in nucleotide-sugar biosynthesis; UDP-alpha-D-glucuronate biosynthesis; UDP-alpha-D-glucuronate from UDP-alpha-D-glucose: step 1/1. UDP-alpha-D-xylose (UDX) acts as a feedback inhibitor. It binds at the same site as the substrate, but functions as allosteric inhibitor by triggering a conformation change that disrupts the active hexameric ring structure and gives rise to an inactive, horseshoe-shaped hexamer. Functionally, catalyzes the formation of UDP-alpha-D-glucuronate, a constituent of complex glycosaminoglycans. Required for the biosynthesis of chondroitin sulfate and heparan sulfate. Required for embryonic development via its role in the biosynthesis of glycosaminoglycans. Required for proper brain and neuronal development. The polypeptide is UDP-glucose 6-dehydrogenase (Ugdh) (Mus musculus (Mouse)).